We begin with the raw amino-acid sequence, 358 residues long: Chorismate synthase (358 aa).

Arginine 46 is a binding site for NADP(+). FMN-binding positions include 123–125 (RSS), 235–236 (NA), glycine 275, 290–294 (KPTPS), and arginine 316.

It belongs to the chorismate synthase family. In terms of assembly, homotetramer. It depends on FMNH2 as a cofactor.

It catalyses the reaction 5-O-(1-carboxyvinyl)-3-phosphoshikimate = chorismate + phosphate. Its pathway is metabolic intermediate biosynthesis; chorismate biosynthesis; chorismate from D-erythrose 4-phosphate and phosphoenolpyruvate: step 7/7. Its function is as follows. Catalyzes the anti-1,4-elimination of the C-3 phosphate and the C-6 proR hydrogen from 5-enolpyruvylshikimate-3-phosphate (EPSP) to yield chorismate, which is the branch point compound that serves as the starting substrate for the three terminal pathways of aromatic amino acid biosynthesis. This reaction introduces a second double bond into the aromatic ring system. The polypeptide is Chorismate synthase (Sulfurimonas denitrificans (strain ATCC 33889 / DSM 1251) (Thiomicrospira denitrificans (strain ATCC 33889 / DSM 1251))).